Here is a 343-residue protein sequence, read N- to C-terminus: Selenide, water dikinase (343 aa).

The active site involves U15. Position 15 (U15) is a non-standard amino acid, selenocysteine. ATP contacts are provided by residues K18 and 45–47; that span reads TAD. D48 serves as a coordination point for Mg(2+). ATP-binding positions include D65, D88, and 135 to 137; that span reads GHT. Mg(2+) is bound at residue D88. D223 lines the Mg(2+) pocket.

It belongs to the selenophosphate synthase 1 family. Class I subfamily. As to quaternary structure, homodimer. It depends on Mg(2+) as a cofactor.

It catalyses the reaction hydrogenselenide + ATP + H2O = selenophosphate + AMP + phosphate + 2 H(+). Its function is as follows. Synthesizes selenophosphate from selenide and ATP. The sequence is that of Selenide, water dikinase from Carboxydothermus hydrogenoformans (strain ATCC BAA-161 / DSM 6008 / Z-2901).